We begin with the raw amino-acid sequence, 137 residues long: Large ribosomal subunit protein uL16 (137 aa).

This sequence belongs to the universal ribosomal protein uL16 family. As to quaternary structure, part of the 50S ribosomal subunit.

In terms of biological role, binds 23S rRNA and is also seen to make contacts with the A and possibly P site tRNAs. The sequence is that of Large ribosomal subunit protein uL16 from Stenotrophomonas maltophilia (strain K279a).